The following is a 378-amino-acid chain: Small RNA 2'-O-methyltransferase (378 aa).

Residue Asp61 participates in S-adenosyl-L-methionine binding. Mg(2+) is bound by residues Glu114, Glu117, His118, and His176.

Belongs to the methyltransferase superfamily. HEN1 family. Mg(2+) is required as a cofactor.

The protein localises to the cytoplasm. The enzyme catalyses small RNA 3'-end nucleotide + S-adenosyl-L-methionine = small RNA 3'-end 2'-O-methylnucleotide + S-adenosyl-L-homocysteine + H(+). Methyltransferase that adds a 2'-O-methyl group at the 3'-end of small RNAs. In Schizosaccharomyces pombe (strain 972 / ATCC 24843) (Fission yeast), this protein is Small RNA 2'-O-methyltransferase.